A 378-amino-acid chain; its full sequence is Cyclic di-GMP phosphodiesterase response regulator RpfG (378 aa).

One can recognise a Response regulatory domain in the interval N29–L147. A 4-aspartylphosphate modification is found at D80. Residues V174–T371 enclose the HD-GYP domain.

In terms of assembly, interacts with a subset of GGDEF domain-containing proteins. In terms of processing, phosphorylated and activated by RpfC.

Its subcellular location is the cytoplasm. It carries out the reaction 3',3'-c-di-GMP + 2 H2O = 2 GMP + 2 H(+). Functionally, member of the two-component regulatory system RpfG/RpfC, which is involved in the perception and response to the diffusible signaling factor (DSF), which is essential for cell-cell signaling. Detection of DSF leads to the positive regulation of biofilm dispersal and the production of virulence factors. Activated RpfG degrades cyclic di-GMP to GMP, leading to the activation of Clp, a global transcriptional regulator that regulates a large set of genes in DSF pathway. May also directly control genes involved in biofilm dispersal. In Xanthomonas campestris pv. campestris (strain 8004), this protein is Cyclic di-GMP phosphodiesterase response regulator RpfG (rpfG).